We begin with the raw amino-acid sequence, 340 residues long: Phenylalanine--tRNA ligase alpha subunit (340 aa).

Glu255 lines the Mg(2+) pocket.

The protein belongs to the class-II aminoacyl-tRNA synthetase family. Phe-tRNA synthetase alpha subunit type 1 subfamily. In terms of assembly, tetramer of two alpha and two beta subunits. Mg(2+) serves as cofactor.

It is found in the cytoplasm. It catalyses the reaction tRNA(Phe) + L-phenylalanine + ATP = L-phenylalanyl-tRNA(Phe) + AMP + diphosphate + H(+). This chain is Phenylalanine--tRNA ligase alpha subunit, found in Desulforamulus reducens (strain ATCC BAA-1160 / DSM 100696 / MI-1) (Desulfotomaculum reducens).